A 451-amino-acid chain; its full sequence is Tubulin alpha-2 chain (451 aa).

Q11 is a binding site for GTP. K40 carries the post-translational modification N6-acetyllysine. Positions 71, 144, 145, 179, 206, and 228 each coordinate GTP. E71 contributes to the Mg(2+) binding site. E254 is a catalytic residue.

The protein belongs to the tubulin family. As to quaternary structure, dimer of alpha and beta chains. A typical microtubule is a hollow water-filled tube with an outer diameter of 25 nm and an inner diameter of 15 nM. Alpha-beta heterodimers associate head-to-tail to form protofilaments running lengthwise along the microtubule wall with the beta-tubulin subunit facing the microtubule plus end conferring a structural polarity. Microtubules usually have 13 protofilaments but different protofilament numbers can be found in some organisms and specialized cells. Mg(2+) serves as cofactor. Post-translationally, undergoes a tyrosination/detyrosination cycle, the cyclic removal and re-addition of a C-terminal tyrosine residue by the enzymes tubulin tyrosine carboxypeptidase (TTCP) and tubulin tyrosine ligase (TTL), respectively. Acetylation of alpha chains at Lys-40 stabilizes microtubules and affects affinity and processivity of microtubule motors. This modification has a role in multiple cellular functions, ranging from cell motility, cell cycle progression or cell differentiation to intracellular trafficking and signaling.

The protein resides in the cytoplasm. It localises to the cytoskeleton. It catalyses the reaction GTP + H2O = GDP + phosphate + H(+). Tubulin is the major constituent of microtubules, a cylinder consisting of laterally associated linear protofilaments composed of alpha- and beta-tubulin heterodimers. Microtubules grow by the addition of GTP-tubulin dimers to the microtubule end, where a stabilizing cap forms. Below the cap, tubulin dimers are in GDP-bound state, owing to GTPase activity of alpha-tubulin. The chain is Tubulin alpha-2 chain (TUBA2) from Hordeum vulgare (Barley).